Reading from the N-terminus, the 404-residue chain is Argininosuccinate synthase (404 aa).

Residues 11 to 19 and Ala38 contribute to the ATP site; that span reads AYSGGLDTS. L-citrulline contacts are provided by Tyr91 and Ser96. An ATP-binding site is contributed by Gly121. L-aspartate contacts are provided by Thr123, Asn127, and Asp128. Asn127 is an L-citrulline binding site. Residues Arg131, Ser181, Ser190, Glu266, and Tyr278 each coordinate L-citrulline.

It belongs to the argininosuccinate synthase family. Type 1 subfamily. As to quaternary structure, homotetramer.

The protein resides in the cytoplasm. The enzyme catalyses L-citrulline + L-aspartate + ATP = 2-(N(omega)-L-arginino)succinate + AMP + diphosphate + H(+). It functions in the pathway amino-acid biosynthesis; L-arginine biosynthesis; L-arginine from L-ornithine and carbamoyl phosphate: step 2/3. This Sulfurimonas denitrificans (strain ATCC 33889 / DSM 1251) (Thiomicrospira denitrificans (strain ATCC 33889 / DSM 1251)) protein is Argininosuccinate synthase.